The sequence spans 337 residues: Lipoyl synthase (337 aa).

[4Fe-4S] cluster contacts are provided by Cys-81, Cys-86, Cys-92, Cys-107, Cys-111, Cys-114, and Ser-323. Residues 93–312 (FSHGTATFMI…EDYGNALGFS (220 aa)) form the Radical SAM core domain.

This sequence belongs to the radical SAM superfamily. Lipoyl synthase family. [4Fe-4S] cluster is required as a cofactor.

The protein resides in the cytoplasm. The enzyme catalyses [[Fe-S] cluster scaffold protein carrying a second [4Fe-4S](2+) cluster] + N(6)-octanoyl-L-lysyl-[protein] + 2 oxidized [2Fe-2S]-[ferredoxin] + 2 S-adenosyl-L-methionine + 4 H(+) = [[Fe-S] cluster scaffold protein] + N(6)-[(R)-dihydrolipoyl]-L-lysyl-[protein] + 4 Fe(3+) + 2 hydrogen sulfide + 2 5'-deoxyadenosine + 2 L-methionine + 2 reduced [2Fe-2S]-[ferredoxin]. It participates in protein modification; protein lipoylation via endogenous pathway; protein N(6)-(lipoyl)lysine from octanoyl-[acyl-carrier-protein]: step 2/2. Functionally, catalyzes the radical-mediated insertion of two sulfur atoms into the C-6 and C-8 positions of the octanoyl moiety bound to the lipoyl domains of lipoate-dependent enzymes, thereby converting the octanoylated domains into lipoylated derivatives. This is Lipoyl synthase from Xanthomonas axonopodis pv. citri (strain 306).